We begin with the raw amino-acid sequence, 173 residues long: Translation initiation factor IF-3 (173 aa).

This sequence belongs to the IF-3 family. Monomer.

It is found in the cytoplasm. In terms of biological role, IF-3 binds to the 30S ribosomal subunit and shifts the equilibrium between 70S ribosomes and their 50S and 30S subunits in favor of the free subunits, thus enhancing the availability of 30S subunits on which protein synthesis initiation begins. The polypeptide is Translation initiation factor IF-3 (Caulobacter vibrioides (strain ATCC 19089 / CIP 103742 / CB 15) (Caulobacter crescentus)).